A 346-amino-acid chain; its full sequence is Protein tas (346 aa).

Tyrosine 53 functions as the Proton donor in the catalytic mechanism. An NADP(+)-binding site is contributed by 234–244 (SCLGFGTLTGK).

The protein belongs to the aldo/keto reductase family. Aldo/keto reductase 2 subfamily.

This Escherichia coli (strain K12) protein is Protein tas (tas).